Reading from the N-terminus, the 404-residue chain is Probable tRNA sulfurtransferase (404 aa).

One can recognise a THUMP domain in the interval 60–165; the sequence is EEVIPKLSKV…KDAAYLSYET (106 aa). Residues 183 to 184, 208 to 209, Arg-265, Gly-287, and Gln-296 each bind ATP; these read ML and HF.

This sequence belongs to the ThiI family.

The protein resides in the cytoplasm. The enzyme catalyses [ThiI sulfur-carrier protein]-S-sulfanyl-L-cysteine + a uridine in tRNA + 2 reduced [2Fe-2S]-[ferredoxin] + ATP + H(+) = [ThiI sulfur-carrier protein]-L-cysteine + a 4-thiouridine in tRNA + 2 oxidized [2Fe-2S]-[ferredoxin] + AMP + diphosphate. It carries out the reaction [ThiS sulfur-carrier protein]-C-terminal Gly-Gly-AMP + S-sulfanyl-L-cysteinyl-[cysteine desulfurase] + AH2 = [ThiS sulfur-carrier protein]-C-terminal-Gly-aminoethanethioate + L-cysteinyl-[cysteine desulfurase] + A + AMP + 2 H(+). Its pathway is cofactor biosynthesis; thiamine diphosphate biosynthesis. Catalyzes the ATP-dependent transfer of a sulfur to tRNA to produce 4-thiouridine in position 8 of tRNAs, which functions as a near-UV photosensor. Also catalyzes the transfer of sulfur to the sulfur carrier protein ThiS, forming ThiS-thiocarboxylate. This is a step in the synthesis of thiazole, in the thiamine biosynthesis pathway. The sulfur is donated as persulfide by IscS. The polypeptide is Probable tRNA sulfurtransferase (Enterococcus faecalis (strain ATCC 700802 / V583)).